We begin with the raw amino-acid sequence, 317 residues long: Transaldolase (317 aa).

The active-site Schiff-base intermediate with substrate is Lys-132.

It belongs to the transaldolase family. Type 1 subfamily. As to quaternary structure, homodimer.

Its subcellular location is the cytoplasm. It catalyses the reaction D-sedoheptulose 7-phosphate + D-glyceraldehyde 3-phosphate = D-erythrose 4-phosphate + beta-D-fructose 6-phosphate. The protein operates within carbohydrate degradation; pentose phosphate pathway; D-glyceraldehyde 3-phosphate and beta-D-fructose 6-phosphate from D-ribose 5-phosphate and D-xylulose 5-phosphate (non-oxidative stage): step 2/3. Transaldolase is important for the balance of metabolites in the pentose-phosphate pathway. In Haemophilus influenzae (strain PittGG), this protein is Transaldolase.